We begin with the raw amino-acid sequence, 261 residues long: Pimeloyl-[acyl-carrier protein] methyl ester esterase (261 aa).

Residues 15–243 (HLVLLHGWGL…AAHAPFISHP (229 aa)) enclose the AB hydrolase-1 domain. Residues Trp22, 83–84 (SL), and 144–148 (FLALQ) contribute to the substrate site. The active-site Nucleophile is Ser83. Residues Asp208 and His236 contribute to the active site. His236 contacts substrate.

Belongs to the AB hydrolase superfamily. Carboxylesterase BioH family. In terms of assembly, monomer.

Its subcellular location is the cytoplasm. The catalysed reaction is 6-carboxyhexanoyl-[ACP] methyl ester + H2O = 6-carboxyhexanoyl-[ACP] + methanol + H(+). It participates in cofactor biosynthesis; biotin biosynthesis. The physiological role of BioH is to remove the methyl group introduced by BioC when the pimeloyl moiety is complete. It allows to synthesize pimeloyl-ACP via the fatty acid synthetic pathway through the hydrolysis of the ester bonds of pimeloyl-ACP esters. This is Pimeloyl-[acyl-carrier protein] methyl ester esterase from Proteus mirabilis (strain HI4320).